The sequence spans 321 residues: Calcium-regulated beta-propeller protein CarP (321 aa).

The signal sequence occupies residues 1–42 (MTIHAQTPEPFSMSRAFTPRRLLLAVLLVALSALVLLGQSFR).

Belongs to the YjiK family.

It localises to the cell inner membrane. In terms of biological role, plays a role in intracellular Ca(2+) homeostasis. Involved in modulating Ca(2+)-induced swarming motility and pyocyanine production. Plays a role in regulating virulence in a Ca(2+)-dependent manner. Involved in cell protection against oxidative stress in the presence of elevated Ca(2+). The chain is Calcium-regulated beta-propeller protein CarP from Pseudomonas aeruginosa (strain ATCC 15692 / DSM 22644 / CIP 104116 / JCM 14847 / LMG 12228 / 1C / PRS 101 / PAO1).